The following is a 246-amino-acid chain: NAD-dependent protein deacylase (246 aa).

The 245-residue stretch at 1–245 (MKEFITKHRD…ELIREILDNP (245 aa)) folds into the Deacetylase sirtuin-type domain. NAD(+) is bound at residue 20–39 (GAGISAESGIPTFRGSEGLW). Substrate-binding residues include Y64 and R67. 98-101 (QNVD) serves as a coordination point for NAD(+). H116 (proton acceptor) is an active-site residue. Zn(2+) contacts are provided by C124, C127, C146, and C149. Residues 186-188 (GTS), 212-214 (NPE), and T230 each bind NAD(+).

This sequence belongs to the sirtuin family. Class III subfamily. The cofactor is Zn(2+).

It is found in the cytoplasm. It catalyses the reaction N(6)-acetyl-L-lysyl-[protein] + NAD(+) + H2O = 2''-O-acetyl-ADP-D-ribose + nicotinamide + L-lysyl-[protein]. It carries out the reaction N(6)-succinyl-L-lysyl-[protein] + NAD(+) + H2O = 2''-O-succinyl-ADP-D-ribose + nicotinamide + L-lysyl-[protein]. Its function is as follows. NAD-dependent lysine deacetylase and desuccinylase that specifically removes acetyl and succinyl groups on target proteins. Modulates the activities of several proteins which are inactive in their acylated form. This chain is NAD-dependent protein deacylase, found in Leptospira interrogans serogroup Icterohaemorrhagiae serovar copenhageni (strain Fiocruz L1-130).